A 415-amino-acid polypeptide reads, in one-letter code: MSFLKEFDKDIFDLCEKELERQSNHLEMIASENFTLPAVMEAMGSVFTNKYAEGYPAKRYYGGCEYADGVEQLAIDRACKLFGCNYANVQPHSGSQANAAVYAALLKAGDKLLGMDLSHGGHLTHGSKPSFSGQNYSSFTYGVELDGRMNYDKILEIAKAVQPKIIVCGASAYAREIDFKKFREIADAVGAIMFADIAHVAGLVVAGEHMSPFPHAHVVTTTTHKTLAGPRGGMIMTNDEDIAKKINSAIFPGIQGGPLVHVIAAKAVGFKYNLSAEWKDYAVQVKANAKILGEVLVKRGYDLVSGGTDNHLVLLSFLNRDFSGKDADIALGNAGITVNKNTVPGETRSPFVTSGIRIGSPALTSRGMKEREFEFIANKIADVLDDINNTKLQESVKKELKELAQKFVIYNQSTY.

(6S)-5,6,7,8-tetrahydrofolate contacts are provided by residues L117 and 121–123; that span reads GHL. K225 carries the post-translational modification N6-(pyridoxal phosphate)lysine. 349 to 351 is a (6S)-5,6,7,8-tetrahydrofolate binding site; sequence SPF.

This sequence belongs to the SHMT family. In terms of assembly, homodimer. Pyridoxal 5'-phosphate is required as a cofactor.

It localises to the cytoplasm. It catalyses the reaction (6R)-5,10-methylene-5,6,7,8-tetrahydrofolate + glycine + H2O = (6S)-5,6,7,8-tetrahydrofolate + L-serine. Its pathway is one-carbon metabolism; tetrahydrofolate interconversion. It functions in the pathway amino-acid biosynthesis; glycine biosynthesis; glycine from L-serine: step 1/1. Its function is as follows. Catalyzes the reversible interconversion of serine and glycine with tetrahydrofolate (THF) serving as the one-carbon carrier. This reaction serves as the major source of one-carbon groups required for the biosynthesis of purines, thymidylate, methionine, and other important biomolecules. Also exhibits THF-independent aldolase activity toward beta-hydroxyamino acids, producing glycine and aldehydes, via a retro-aldol mechanism. In Sulfurimonas denitrificans (strain ATCC 33889 / DSM 1251) (Thiomicrospira denitrificans (strain ATCC 33889 / DSM 1251)), this protein is Serine hydroxymethyltransferase 1.